Here is a 603-residue protein sequence, read N- to C-terminus: Coiled-coil domain-containing protein 148 (603 aa).

2 coiled-coil regions span residues leucine 365–lysine 429 and glutamate 461–alanine 510.

The protein is Coiled-coil domain-containing protein 148 (CCDC148) of Macaca fascicularis (Crab-eating macaque).